The sequence spans 60 residues: Large ribosomal subunit protein bL32 (60 aa).

Belongs to the bacterial ribosomal protein bL32 family.

In Clostridium novyi (strain NT), this protein is Large ribosomal subunit protein bL32.